A 429-amino-acid chain; its full sequence is MLSIAEVSTKAYVGSKVSIRGWVYRIRSSGGVTFVVVRDSSGIIQCTARKNELPEDVYDTISSLGIESSVEFHGTLKEDRRSPSGYEIAVDSFRVYQKNDVFPITKDQGEEFLLDNRHLWLRSREFTSVLKIRSTIFRSFADFFYENGYYQVQTPFMVSTAVEGGSTLFKVDFFGEPIYLNQSAQFYLETMIYSLEKVFTIAPSFRAEKSRTRRHLTEYWHAEAEVAWIDNNEMMDIEERMIYYIVSRVTEDNEDELKMLNRDPEVLKAMKPPFPRIRYSEIIKVANSIGLPLKYGDDLGADEERQITMKYDRPIFVTNYPKDLKPFYMPVDPENPGEVLNHDMLAPEGYGEIIGGSQRIWNYDELMQRIREANLDESAYYWYVDLRKYGSVPHSGFGLGLDRLAMWIMHLDNIREAIPYPRTIRRTKP.

This sequence belongs to the class-II aminoacyl-tRNA synthetase family.

It is found in the cytoplasm. It catalyses the reaction tRNA(Asn) + L-asparagine + ATP = L-asparaginyl-tRNA(Asn) + AMP + diphosphate + H(+). The chain is Asparagine--tRNA ligase from Thermoplasma acidophilum (strain ATCC 25905 / DSM 1728 / JCM 9062 / NBRC 15155 / AMRC-C165).